A 431-amino-acid polypeptide reads, in one-letter code: Nocturnin (431 aa).

The N-terminal 75 residues, 1 to 75 (MFHSPRRLCS…SMGTGTSRLY (75 aa)), are a transit peptide targeting the mitochondrion. The span at 20-31 (LRRLPAPGLRRP) shows a compositional bias: low complexity. The interval 20–41 (LRRLPAPGLRRPLSPPAAVPRP) is disordered. The span at 32–41 (LSPPAAVPRP) shows a compositional bias: pro residues. Mg(2+) is bound at residue E195. Residues E195, 219–221 (KPW), N263, 286–289 (HLKA), and 324–326 (DFN) each bind substrate. The segment at 343 to 353 (NLNSAYKLLSA) is interaction with PPARG. H414 is a binding site for substrate.

It belongs to the CCR4/nocturin family. In terms of assembly, interacts with PPARG. Mg(2+) is required as a cofactor. Adipose tissue. Expression is higher in subcutaneous adipose tissue as compared to visceral adipose tissue.

Its subcellular location is the cytoplasm. The protein resides in the nucleus. It localises to the perinuclear region. The protein localises to the mitochondrion. It catalyses the reaction NADP(+) + H2O = phosphate + NAD(+). It carries out the reaction NADPH + H2O = phosphate + NADH. In terms of biological role, phosphatase which catalyzes the conversion of NADP(+) to NAD(+) and of NADPH to NADH. Shows a small preference for NADPH over NADP(+). Represses translation and promotes degradation of target mRNA molecules. Plays an important role in post-transcriptional regulation of metabolic genes under circadian control. Exerts a rhythmic post-transcriptional control of genes necessary for metabolic functions including nutrient absorption, glucose/insulin sensitivity, lipid metabolism, adipogenesis, inflammation and osteogenesis. Plays an important role in favoring adipogenesis over osteoblastogenesis and acts as a key regulator of the adipogenesis/osteogenesis balance. Promotes adipogenesis by facilitating PPARG nuclear translocation which activates its transcriptional activity. Regulates circadian expression of NOS2 in the liver and negatively regulates the circadian expression of IGF1 in the bone. Critical for proper development of early embryos. The chain is Nocturnin from Homo sapiens (Human).